Reading from the N-terminus, the 228-residue chain is Auxin-responsive protein IAA16 (228 aa).

An EAR-like (transcriptional repression) motif is present at residues 19–23 (LSLAL). Positions 28–39 (SSSGLQGNTSTA) are enriched in polar residues. Disordered regions lie at residues 28–57 (SSSGLQGNTSTAADGAKGNDGFKASRPAAP) and 70–90 (NLASSSSSSKPPRGGRDAAAA). The PB1 domain maps to 97–214 (ARFVKVNMDG…RVLRSSDLNA (118 aa)).

The protein belongs to the Aux/IAA family. As to quaternary structure, homodimers and heterodimers. In terms of tissue distribution, expressed in roots, flowers and seedlings.

It is found in the nucleus. Its function is as follows. Aux/IAA proteins are short-lived transcriptional factors that function as repressors of early auxin response genes at low auxin concentrations. The protein is Auxin-responsive protein IAA16 (IAA16) of Oryza sativa subsp. japonica (Rice).